Here is a 307-residue protein sequence, read N- to C-terminus: Aquaporin Lacbi1:387054 (307 aa).

The Cytoplasmic portion of the chain corresponds to 1–40 (MSNAPLVHLSDLQKRLRVFAVWEKVRNDGKVHWAIECFAE). The helical transmembrane segment at 41–61 (MFGVFLYVYFGLGSTAGWVIG) threads the bilayer. Residues 62–68 (NIIKETN) lie on the Extracellular side of the membrane. Residues 69–89 (LSSILQIGLAYAFGIWFAIGL) form a helical membrane-spanning segment. Residues 90–120 (CSSSSGGHFNPCVTLSFVVFKGFPKLKACRY) are Cytoplasmic-facing. The short motif at 99–101 (NPC) is the NPA 1 element. A helical transmembrane segment spans residues 121–141 (IIAQILGAYIASALVYSQWNV). At 142–157 (LIEECTLGLIKAKAYD) the chain is on the extracellular side. Residues 158 to 178 (TTMFTPNGPAGIFALYLVPGA) traverse the membrane as a helical segment. Positions 167–169 (AGI) match the NPA 2 motif. Residues 179–183 (QSVPR) lie on the Cytoplasmic side of the membrane. A helical membrane pass occupies residues 184–203 (ALLNEFVNSTLIGMIIWAAL). The Extracellular segment spans residues 204–216 (DPTNMMVPPAMGP). A helical transmembrane segment spans residues 217–237 (LFISLAYAAVIWGFATPAVAL). Residues 238–264 (NTARDLGARLFAMSIWGTKAAGSGYSA) are Cytoplasmic-facing. A helical transmembrane segment spans residues 265–285 (IACLINIPATLLGVFLYEVFF). At 286–307 (TDSDRGKLLPILNGKKLKHIFS) the chain is on the extracellular side.

Belongs to the MIP/aquaporin (TC 1.A.8) family.

The protein resides in the membrane. The enzyme catalyses H2O(in) = H2O(out). It carries out the reaction NH4(+)(in) = NH4(+)(out). It catalyses the reaction urea(in) = urea(out). The catalysed reaction is glycerol(in) = glycerol(out). Its function is as follows. Water channel required to facilitate the transport of water across membranes. In addition to water, also shows strong ammonium transport activity. Also enables low but statistically significant glycerol and urea permeability. May be involved in fungal nitrogen (ammonium) support of the plant host in symbiosis. The sequence is that of Aquaporin Lacbi1:387054 from Laccaria bicolor (strain S238N-H82 / ATCC MYA-4686) (Bicoloured deceiver).